Here is a 310-residue protein sequence, read N- to C-terminus: tRNA dimethylallyltransferase (310 aa).

Residue 13 to 20 participates in ATP binding; the sequence is GPTASGKT. 15–20 contacts substrate; that stretch reads TASGKT. Interaction with substrate tRNA regions lie at residues 38 to 41, 162 to 166, 243 to 248, and 276 to 283; these read DSAL, QRLSR, RCVGYR, and KRQITWLR.

This sequence belongs to the IPP transferase family. As to quaternary structure, monomer. It depends on Mg(2+) as a cofactor.

The enzyme catalyses adenosine(37) in tRNA + dimethylallyl diphosphate = N(6)-dimethylallyladenosine(37) in tRNA + diphosphate. In terms of biological role, catalyzes the transfer of a dimethylallyl group onto the adenine at position 37 in tRNAs that read codons beginning with uridine, leading to the formation of N6-(dimethylallyl)adenosine (i(6)A). The sequence is that of tRNA dimethylallyltransferase from Vibrio parahaemolyticus serotype O3:K6 (strain RIMD 2210633).